The sequence spans 90 residues: Small ribosomal subunit protein bS20 (90 aa).

The tract at residues 1 to 29 (MANTASAEKRNRQAQKRRARNVQVRTGVK) is disordered.

Belongs to the bacterial ribosomal protein bS20 family.

In terms of biological role, binds directly to 16S ribosomal RNA. In Anaeromyxobacter sp. (strain Fw109-5), this protein is Small ribosomal subunit protein bS20.